A 318-amino-acid polypeptide reads, in one-letter code: Replication factor C small subunit (318 aa).

43–50 (GPAGTGKT) serves as a coordination point for ATP.

The protein belongs to the activator 1 small subunits family. RfcS subfamily. In terms of assembly, heteromultimer composed of small subunits (RfcS) and large subunits (RfcL).

Functionally, part of the RFC clamp loader complex which loads the PCNA sliding clamp onto DNA. This chain is Replication factor C small subunit, found in Picrophilus torridus (strain ATCC 700027 / DSM 9790 / JCM 10055 / NBRC 100828 / KAW 2/3).